A 745-amino-acid polypeptide reads, in one-letter code: uncharacterized protein (745 aa).

The 99-residue stretch at 158–256 (NQVCDYIELH…HQTPKQYRGD (99 aa)) folds into the HTH araC/xylS-type domain. 2 DNA-binding regions (H-T-H motif) span residues 175 to 196 (SELS…AESL) and 223 to 246 (ITDI…KHFT).

This is an uncharacterized protein from Staphylococcus aureus (strain MRSA252).